Here is a 117-residue protein sequence, read N- to C-terminus: Immunoglobulin heavy variable 1-69 (117 aa).

A signal peptide spans 1–19; the sequence is MDWTWRFLFVVAAATGVQS. Gln-20 carries the post-translational modification Pyrrolidone carboxylic acid. The interval 20–44 is framework-1; that stretch reads QVQLVQSGAEVKKPGSSVKVSCKAS. Residues 20 to 117 enclose the Ig-like domain; sequence QVQLVQSGAE…EDTAVYYCAR (98 aa). Cys-41 and Cys-115 are oxidised to a cystine. A complementarity-determining-1 region spans residues 45 to 52; that stretch reads GGTFSSYA. The framework-2 stretch occupies residues 53 to 69; the sequence is ISWVRQAPGQGLEWMGG. The complementarity-determining-2 stretch occupies residues 70-77; that stretch reads IIPIFGTA. Residues 78–115 form a framework-3 region; it reads NYAQKFQGRVTITADKSTSTAYMELSSLRSEDTAVYYC. Positions 116-117 are complementarity-determining-3; sequence AR.

Immunoglobulins are composed of two identical heavy chains and two identical light chains; disulfide-linked.

The protein localises to the secreted. The protein resides in the cell membrane. V region of the variable domain of immunoglobulin heavy chains that participates in the antigen recognition. Immunoglobulins, also known as antibodies, are membrane-bound or secreted glycoproteins produced by B lymphocytes. In the recognition phase of humoral immunity, the membrane-bound immunoglobulins serve as receptors which, upon binding of a specific antigen, trigger the clonal expansion and differentiation of B lymphocytes into immunoglobulins-secreting plasma cells. Secreted immunoglobulins mediate the effector phase of humoral immunity, which results in the elimination of bound antigens. The antigen binding site is formed by the variable domain of one heavy chain, together with that of its associated light chain. Thus, each immunoglobulin has two antigen binding sites with remarkable affinity for a particular antigen. The variable domains are assembled by a process called V-(D)-J rearrangement and can then be subjected to somatic hypermutations which, after exposure to antigen and selection, allow affinity maturation for a particular antigen. In Homo sapiens (Human), this protein is Immunoglobulin heavy variable 1-69.